Consider the following 305-residue polypeptide: Uracil-DNA glycosylase (305 aa).

The active-site Proton acceptor is Asp148.

This sequence belongs to the uracil-DNA glycosylase (UDG) superfamily. UNG family.

It is found in the host nucleus. The enzyme catalyses Hydrolyzes single-stranded DNA or mismatched double-stranded DNA and polynucleotides, releasing free uracil.. In terms of biological role, excises uracil residues from the DNA which can arise as a result of misincorporation of dUMP residues by DNA polymerase or deamination of cytosines. Therefore may reduce deleterious uracil incorporation into the viral genome, particularly in terminally differentiated cells which lack DNA repair enzymes. The protein is Uracil-DNA glycosylase of Varicella-zoster virus (strain Dumas) (HHV-3).